Here is a 194-residue protein sequence, read N- to C-terminus: Fibroblast growth factor 7 (194 aa).

The first 31 residues, 1-31 (MRKWILTRILPTPLYRPCFHLVCLVGTISLA), serve as a signal peptide directing secretion. 2 N-linked (GlcNAc...) asparagine glycosylation sites follow: Asn-45 and Asn-149.

This sequence belongs to the heparin-binding growth factors family. In terms of assembly, interacts with FGFBP1. Interacts with FGFR2. Affinity between fibroblast growth factors (FGFs) and their receptors is increased by heparan sulfate glycosaminoglycans that function as coreceptors.

Growth factor active on keratinocytes. Possible major paracrine effector of normal epithelial cell proliferation. The chain is Fibroblast growth factor 7 (Fgf7) from Rattus norvegicus (Rat).